A 168-amino-acid chain; its full sequence is Transcription antitermination protein NusB (168 aa).

This sequence belongs to the NusB family.

In terms of biological role, involved in transcription antitermination. Required for transcription of ribosomal RNA (rRNA) genes. Binds specifically to the boxA antiterminator sequence of the ribosomal RNA (rrn) operons. This is Transcription antitermination protein NusB from Brucella anthropi (strain ATCC 49188 / DSM 6882 / CCUG 24695 / JCM 21032 / LMG 3331 / NBRC 15819 / NCTC 12168 / Alc 37) (Ochrobactrum anthropi).